The chain runs to 127 residues: uncharacterized protein (127 aa).

An N-terminal signal peptide occupies residues 1–16; the sequence is MIKKIIFGIAILLSLS. A lipid anchor (N-palmitoyl cysteine) is attached at cysteine 17. Cysteine 17 carries S-diacylglycerol cysteine lipidation. The stretch at 56 to 101 forms a coiled coil; the sequence is EVRKEIQEYRVEIVDINKKKRELYNSLSKEAQNFLAEQQKYKQKLS. The interval 101-127 is disordered; that stretch reads SISKLPTEDDSPNNTANSKDNKDTDTK.

Its subcellular location is the cell membrane. This is an uncharacterized protein from Rickettsia felis (strain ATCC VR-1525 / URRWXCal2) (Rickettsia azadi).